Reading from the N-terminus, the 331-residue chain is Ketol-acid reductoisomerase (NADP(+)) (331 aa).

The KARI N-terminal Rossmann domain occupies 2–182 (AKMYYDQDAD…GGTKAGAIET (181 aa)). NADP(+)-binding positions include 25 to 28 (FGSQ), Ser51, Ser53, and 83 to 86 (DEKQ). Residue His108 is part of the active site. NADP(+) is bound at residue Gly134. Positions 183–328 (TFKEETETDL…KSLREMMPWL (146 aa)) constitute a KARI C-terminal knotted domain. Residues Asp191, Glu195, Glu227, and Glu231 each coordinate Mg(2+). Ser252 serves as a coordination point for substrate.

This sequence belongs to the ketol-acid reductoisomerase family. It depends on Mg(2+) as a cofactor.

It catalyses the reaction (2R)-2,3-dihydroxy-3-methylbutanoate + NADP(+) = (2S)-2-acetolactate + NADPH + H(+). The catalysed reaction is (2R,3R)-2,3-dihydroxy-3-methylpentanoate + NADP(+) = (S)-2-ethyl-2-hydroxy-3-oxobutanoate + NADPH + H(+). It functions in the pathway amino-acid biosynthesis; L-isoleucine biosynthesis; L-isoleucine from 2-oxobutanoate: step 2/4. It participates in amino-acid biosynthesis; L-valine biosynthesis; L-valine from pyruvate: step 2/4. Its function is as follows. Involved in the biosynthesis of branched-chain amino acids (BCAA). Catalyzes an alkyl-migration followed by a ketol-acid reduction of (S)-2-acetolactate (S2AL) to yield (R)-2,3-dihydroxy-isovalerate. In the isomerase reaction, S2AL is rearranged via a Mg-dependent methyl migration to produce 3-hydroxy-3-methyl-2-ketobutyrate (HMKB). In the reductase reaction, this 2-ketoacid undergoes a metal-dependent reduction by NADPH to yield (R)-2,3-dihydroxy-isovalerate. The sequence is that of Ketol-acid reductoisomerase (NADP(+)) from Caldanaerobacter subterraneus subsp. tengcongensis (strain DSM 15242 / JCM 11007 / NBRC 100824 / MB4) (Thermoanaerobacter tengcongensis).